The chain runs to 229 residues: Cytidylate kinase (229 aa).

10–18 (GFSSCGKST) serves as a coordination point for ATP.

The protein belongs to the cytidylate kinase family. Type 1 subfamily.

It localises to the cytoplasm. It carries out the reaction CMP + ATP = CDP + ADP. The enzyme catalyses dCMP + ATP = dCDP + ADP. The protein is Cytidylate kinase of Bacteroides fragilis (strain ATCC 25285 / DSM 2151 / CCUG 4856 / JCM 11019 / LMG 10263 / NCTC 9343 / Onslow / VPI 2553 / EN-2).